A 308-amino-acid polypeptide reads, in one-letter code: V-type immunoglobulin domain-containing suppressor of T-cell activation (308 aa).

A signal peptide spans methionine 1–alanine 32. The Ig-like V-type domain maps to phenylalanine 33–valine 167. Topologically, residues phenylalanine 33–alanine 191 are extracellular. Asparagine 49, asparagine 91, and asparagine 127 each carry an N-linked (GlcNAc...) asparagine glycan. An intrachain disulfide couples cysteine 54 to cysteine 145. A helical transmembrane segment spans residues alanine 192–valine 212. The Cytoplasmic portion of the chain corresponds to tyrosine 213 to isoleucine 308. The disordered stretch occupies residues methionine 230–isoleucine 308. The residue at position 232 (serine 232) is a Phosphoserine.

At the cell surface, may be cleaved by MMP14. In terms of processing, N-glycosylated. In terms of tissue distribution, expressed in spleen, thymus, bone marrow, lymph node, and in T-cells within the lamina propria of the small intestine. Detected on CD4+ and CD8+ T-cells, bone marrow-derived dendritic cells (BMDCs), peritoneal macrophages, neutrophils, and natural killer (NK) cells. In spleen and lymph nodes, highly expressed on CD4+ T-cell populations, and at lower levels on CD8+ T-cells. In thymus, has low expression on CD4+ cells and CD8+ cells, and not detected on CD4+CD8+ cells. Expressed in splenic and peritoneal CD11b cells. Not detected in most B cells and NK cells (at protein level). Also detected at lower levels in non-hematopoeitic tissues such as heart, brain, lung, kidney, muscle, ovary, and testis.

The protein localises to the cell membrane. Immunoregulatory receptor which inhibits the T-cell response. May promote differentiation of embryonic stem cells, by inhibiting BMP4 signaling. May stimulate MMP14-mediated MMP2 activation. This is V-type immunoglobulin domain-containing suppressor of T-cell activation from Mus musculus (Mouse).